The chain runs to 298 residues: Protoheme IX farnesyltransferase (298 aa).

8 helical membrane passes run 23–43 (VTQLAVFCAVIGMFLAVPGLP), 49–69 (LFGTIGIWLLAAAAFAINCLI), 95–115 (VLSLSGLLGGAGMLVLYHLVN), 117–137 (LTMWLTFATFVGYAVIYTVIL), 144–164 (NIVIGGLSGAMPPALGWASVA), 171–191 (AWVLVLIIFIWTPPHFWALAL), 234–254 (FMHMNGLLYLLAAVILGGIFV), and 276–296 (SILYLALLFGALLVDHWVGVL).

It belongs to the UbiA prenyltransferase family. Protoheme IX farnesyltransferase subfamily.

The protein localises to the cell inner membrane. It carries out the reaction heme b + (2E,6E)-farnesyl diphosphate + H2O = Fe(II)-heme o + diphosphate. Its pathway is porphyrin-containing compound metabolism; heme O biosynthesis; heme O from protoheme: step 1/1. In terms of biological role, converts heme B (protoheme IX) to heme O by substitution of the vinyl group on carbon 2 of heme B porphyrin ring with a hydroxyethyl farnesyl side group. The sequence is that of Protoheme IX farnesyltransferase from Bordetella avium (strain 197N).